A 74-amino-acid chain; its full sequence is Antimicrobial peptide 36.4 (74 aa).

The N-terminal stretch at 1–22 is a signal peptide; sequence MKVNVLLAVFLVVMVVTDHCHA. The residue at position 39 (K39) is a Lysine amide. The propeptide occupies 44 to 74; it reads LQMEARFQPQNKNYRKRELDLENLFTHMPDY.

It belongs to the non-disulfide-bridged peptide (NDBP) superfamily. Short antimicrobial peptide (group 4) family. As to expression, expressed by the venom gland.

Its subcellular location is the secreted. The protein resides in the target cell membrane. Its function is as follows. Cationic host defense peptide that have antibacterial activity by breaking membranes. Is more effective on Gram-positive than on Gram-negative bacteria. The polypeptide is Antimicrobial peptide 36.4 (Lychas mucronatus (Chinese swimming scorpion)).